Consider the following 152-residue polypeptide: Large-conductance mechanosensitive channel (152 aa).

A run of 2 helical transmembrane segments spans residues Val-14–Leu-34 and Gly-81–Ile-101.

This sequence belongs to the MscL family. As to quaternary structure, homopentamer.

It is found in the cell membrane. Its function is as follows. Channel that opens in response to stretch forces in the membrane lipid bilayer. May participate in the regulation of osmotic pressure changes within the cell. The protein is Large-conductance mechanosensitive channel of Clostridium perfringens (strain 13 / Type A).